The primary structure comprises 159 residues: UPF0303 protein Ping_1243 (159 aa).

The protein belongs to the UPF0303 family.

The chain is UPF0303 protein Ping_1243 from Psychromonas ingrahamii (strain DSM 17664 / CCUG 51855 / 37).